Here is a 1484-residue protein sequence, read N- to C-terminus: Cystic fibrosis transmembrane conductance regulator (1484 aa).

Residues 1–77 (MQRSPLEKAS…KLINALRRCF (77 aa)) lie on the Cytoplasmic side of the membrane. Residues 78-98 (FWRFMFYGIILYLGEVTKSVQ) traverse the membrane as a helical segment. Residues 81–365 (FMFYGIILYL…WAVQTWYDSL (285 aa)) enclose the ABC transmembrane type-1 1 domain. The Extracellular segment spans residues 99-122 (PLLLGRIIASYDPDNKEERSIAIY). A helical membrane pass occupies residues 123–146 (LGIGLCLLFVMRTLLLHPAIFGLH). The Cytoplasmic portion of the chain corresponds to 147-195 (RIGMQMRIAMFSLIYKKTLKLSSRVLDKISIGQLVSLLSNNLNKFDEGL). A helical membrane pass occupies residues 196–216 (ALAHFVWIAPLQVTLLMGLLW). Topologically, residues 217–222 (DLLQAS) are extracellular. Residues 223–243 (AFCGLAFLIVLALFQAGLGRM) traverse the membrane as a helical segment. At 244 to 298 (MMKYRDQRAGKINERLVITSEMIENIQSVKAYCWEEAMEKMIESIRQTELKLTRK) the chain is on the cytoplasmic side. Residues 299–319 (AAYVRYFNSSAFFFSGFFVVF) traverse the membrane as a helical segment. Residues 320-339 (LSVLPYALIKTIVLRKIFTT) lie on the Extracellular side of the membrane. Residues 340–358 (ISFCIVLRMAVTRQFPWAV) traverse the membrane as a helical segment. Residues 359-860 (QTWYDSLGAI…YLRYVTIHKS (502 aa)) lie on the Cytoplasmic side of the membrane. Residues Trp-401, Ser-434, 458 to 465 (GSTGAGKT), and Gln-493 each bind ATP. In terms of domain architecture, ABC transporter 1 spans 423 to 646 (NADNSLFFSN…RPDFSSKLMG (224 aa)). Cys-524 is lipidated: S-palmitoyl cysteine. Ser-549 and Ser-660 each carry phosphoserine. Residues 654-833 (SAERRNSIIT…EEINEEDLKE (180 aa)) are disordered R region. Ser-670 is modified (phosphoserine; by PKA). The residue at position 686 (Ser-686) is a Phosphoserine. A Glycyl lysine isopeptide (Lys-Gly) (interchain with G-Cter in ubiquitin) cross-link involves residue Lys-688. A phosphoserine mark is found at Ser-700 and Ser-712. Thr-717 carries the phosphothreonine modification. 5 positions are modified to phosphoserine: Ser-737, Ser-769, Ser-792, Ser-797, and Ser-815. The helical transmembrane segment at 861-881 (LVFVLIWCLVIFLAEVAISLV) threads the bilayer. The ABC transmembrane type-1 2 domain maps to 861-1157 (LVFVLIWCLV…AVNSSIDVDS (297 aa)). The Extracellular segment spans residues 882–920 (VLWLLKKTASQDKGNSTQSINSSYTVIFTSTSTYYVFYI). N-linked (GlcNAc...) asparagine glycans are attached at residues Asn-896 and Asn-902. The discontinuously helical transmembrane segment at 921-941 (YVGVADTLLALGFFRGLPLVH) threads the bilayer. Residues 942-992 (TLITVSKILHHKMLHAVLQAPMSTLNALKAGGILNRFSKDIAILDDLLPLT) are Cytoplasmic-facing. A helical membrane pass occupies residues 993-1013 (IFDFVQLLLIVIGAVTVVSAL). The Extracellular portion of the chain corresponds to 1014–1015 (QP). Residues 1016 to 1036 (YIFLATVPVIAAFIMLRAYFL) traverse the membrane as a helical segment. Residues 1037–1097 (HTSQQLKQLE…TANWFLYLST (61 aa)) are Cytoplasmic-facing. The chain crosses the membrane as a helical span at residues 1098 to 1118 (LRWFQMRMEIIFVIFFIAITF). At 1119–1132 (ISILTTGEGVGAVG) the chain is on the extracellular side. A helical transmembrane segment spans residues 1133–1153 (IILTLAMNIMGTLQWAVNSSI). Topologically, residues 1154-1484 (DVDSLMRSVS…TEEEVQETRL (331 aa)) are cytoplasmic. Positions 1214–1447 (MTVKDLTAKY…KSLFRQAISP (234 aa)) constitute an ABC transporter 2 domain. ATP contacts are provided by residues Tyr-1223 and 1248-1255 (GRTGSGKS). The tract at residues 1390–1484 (RTLKQAFADC…TEEEVQETRL (95 aa)) is interaction with GORASP2. Cys-1399 carries the S-palmitoyl cysteine lipid modification. Phosphoserine occurs at positions 1448 and 1460. Positions 1456–1465 (HRNSSKHKSR) are enriched in basic residues. Residues 1456–1484 (HRNSSKHKSRSQIAALKEETEEEVQETRL) form a disordered region. A compositionally biased stretch (acidic residues) spans 1474-1484 (ETEEEVQETRL). A PDZ-binding motif is present at residues 1482–1484 (TRL).

Belongs to the ABC transporter superfamily. ABCC family. CFTR transporter (TC 3.A.1.202) subfamily. Monomer; does not require oligomerization for channel activity. May form oligomers in the membrane. Interacts with SLC26A3, SLC26A6 and NHERF1. Interacts with SHANK2. Interacts with MYO6. Interacts (via C-terminus) with GOPC (via PDZ domain); this promotes CFTR internalization and thereby decreases channel activity. Interacts with SLC4A7 through NHERF1. Found in a complex with MYO5B and RAB11A. Interacts with ANO1. Interacts with SLC26A8. Interacts with AHCYL1; the interaction increases CFTR activity. Interacts with CSE1L. The core-glycosylated form interacts with GORASP2 (via PDZ GRASP-type 1 domain) in respone to ER stress. Interacts with MARCHF2; the interaction leads to CFTR ubiqtuitination and degradation. Interacts with ADGRG2. N-glycosylated. In terms of processing, phosphorylated; cAMP treatment promotes phosphorylation and activates the channel. Dephosphorylation decreases the ATPase activity (in vitro). Phosphorylation at PKA sites activates the channel. Phosphorylation at PKC sites enhances the response to phosphorylation by PKA. Phosphorylated by AMPK; this inhibits channel activity. Post-translationally, ubiquitinated, leading to its degradation in the lysosome. Deubiquitination by USP10 in early endosomes enhances its endocytic recycling to the cell membrane. Ubiquitinated by RNF185 during ER stress. Ubiquitinated by MARCHF2.

It is found in the apical cell membrane. The protein resides in the early endosome membrane. The protein localises to the cell membrane. It localises to the recycling endosome membrane. Its subcellular location is the endoplasmic reticulum membrane. It is found in the nucleus. The enzyme catalyses ATP + H2O + closed Cl(-) channel = ADP + phosphate + open Cl(-) channel.. It carries out the reaction chloride(in) = chloride(out). The catalysed reaction is hydrogencarbonate(in) = hydrogencarbonate(out). It catalyses the reaction ATP + H2O = ADP + phosphate + H(+). Its function is as follows. Epithelial ion channel that plays an important role in the regulation of epithelial ion and water transport and fluid homeostasis. Mediates the transport of chloride ions across the cell membrane. Possesses an intrinsic ATPase activity and utilizes ATP to gate its channel; the passive flow of anions through the channel is gated by cycles of ATP binding and hydrolysis by the ATP-binding domains. The ion channel is also permeable to HCO(3)(-); selectivity depends on the extracellular chloride concentration. Exerts its function also by modulating the activity of other ion channels and transporters. Contributes to the regulation of the pH and the ion content of the epithelial fluid layer. Modulates the activity of the epithelial sodium channel (ENaC) complex, in part by regulating the cell surface expression of the ENaC complex. May regulate bicarbonate secretion and salvage in epithelial cells by regulating the transporter SLC4A7. Can inhibit the chloride channel activity of ANO1. Plays a role in the chloride and bicarbonate homeostasis during sperm epididymal maturation and capacitation. This chain is Cystic fibrosis transmembrane conductance regulator, found in Mustela putorius furo (European domestic ferret).